Here is a 239-residue protein sequence, read N- to C-terminus: Uracil-DNA glycosylase (239 aa).

Catalysis depends on Asp65, which acts as the Proton acceptor.

The protein belongs to the uracil-DNA glycosylase (UDG) superfamily. UNG family.

It localises to the cytoplasm. It catalyses the reaction Hydrolyzes single-stranded DNA or mismatched double-stranded DNA and polynucleotides, releasing free uracil.. Its function is as follows. Excises uracil residues from the DNA which can arise as a result of misincorporation of dUMP residues by DNA polymerase or due to deamination of cytosine. This Levilactobacillus brevis (strain ATCC 367 / BCRC 12310 / CIP 105137 / JCM 1170 / LMG 11437 / NCIMB 947 / NCTC 947) (Lactobacillus brevis) protein is Uracil-DNA glycosylase.